The chain runs to 434 residues: GTPase Der (434 aa).

EngA-type G domains follow at residues 3–167 (NIVA…PEIE) and 175–350 (PRFA…ESRS). Residues 9–16 (GRPNVGKS), 56–60 (DTGGY), 119–122 (NKVD), 181–188 (GRPNAGKS), 228–232 (DTAGI), and 293–296 (NKWD) contribute to the GTP site. The region spanning 351-434 (KKIKTRQFND…VPISIFFRKK (84 aa)) is the KH-like domain.

It belongs to the TRAFAC class TrmE-Era-EngA-EngB-Septin-like GTPase superfamily. EngA (Der) GTPase family. In terms of assembly, associates with the 50S ribosomal subunit.

In terms of biological role, GTPase that plays an essential role in the late steps of ribosome biogenesis. This is GTPase Der from Christiangramia forsetii (strain DSM 17595 / CGMCC 1.15422 / KT0803) (Gramella forsetii).